A 105-amino-acid polypeptide reads, in one-letter code: U-scoloptoxin(16)-Sm4a (105 aa).

Residues 1 to 22 (MWALTVFVTILAAAIPITGVTG) form the signal peptide.

It belongs to the scoloptoxin-16 family. Post-translationally, contains 4 disulfide bonds. As to expression, expressed by the venom gland.

The protein localises to the secreted. This Scolopendra morsitans (Tanzanian blue ringleg centipede) protein is U-scoloptoxin(16)-Sm4a.